Here is a 521-residue protein sequence, read N- to C-terminus: Protein nucleotidyltransferase YdiU (521 aa).

Residues glycine 109, glycine 111, arginine 112, lysine 131, aspartate 143, glycine 144, arginine 194, and arginine 201 each contribute to the ATP site. The Proton acceptor role is filled by aspartate 270. The Mg(2+) site is built by asparagine 271 and aspartate 280. Aspartate 280 is an ATP binding site.

It belongs to the SELO family. It depends on Mg(2+) as a cofactor. Requires Mn(2+) as cofactor.

The enzyme catalyses L-seryl-[protein] + ATP = 3-O-(5'-adenylyl)-L-seryl-[protein] + diphosphate. It catalyses the reaction L-threonyl-[protein] + ATP = 3-O-(5'-adenylyl)-L-threonyl-[protein] + diphosphate. The catalysed reaction is L-tyrosyl-[protein] + ATP = O-(5'-adenylyl)-L-tyrosyl-[protein] + diphosphate. It carries out the reaction L-histidyl-[protein] + UTP = N(tele)-(5'-uridylyl)-L-histidyl-[protein] + diphosphate. The enzyme catalyses L-seryl-[protein] + UTP = O-(5'-uridylyl)-L-seryl-[protein] + diphosphate. It catalyses the reaction L-tyrosyl-[protein] + UTP = O-(5'-uridylyl)-L-tyrosyl-[protein] + diphosphate. Its function is as follows. Nucleotidyltransferase involved in the post-translational modification of proteins. It can catalyze the addition of adenosine monophosphate (AMP) or uridine monophosphate (UMP) to a protein, resulting in modifications known as AMPylation and UMPylation. The chain is Protein nucleotidyltransferase YdiU from Burkholderia mallei (strain ATCC 23344).